The chain runs to 176 residues: Gamma-crystallin M2 (176 aa).

2 consecutive Beta/gamma crystallin 'Greek key' domains span residues 2 to 40 (GKVI…RVEG) and 41 to 83 (GCWV…RIIP). The interval 84–88 (QYRGS) is connecting peptide. 2 consecutive Beta/gamma crystallin 'Greek key' domains span residues 89 to 129 (YRMR…HVMD) and 130 to 172 (GYWI…RRIM).

It belongs to the beta/gamma-crystallin family. As to quaternary structure, monomer.

Its function is as follows. Crystallins are the dominant structural components of the vertebrate eye lens. This is Gamma-crystallin M2 (GM2) from Chiloscyllium indicum (Slender bamboo shark).